Consider the following 107-residue polypeptide: MVLKLRLARFGRTNAPFYNIVVAHARTARNSKPLEVIGTYDPVPKKDTYDTTGKLHKDIKLDVTRAKYWIGVGAQPTDTVWRLLSLVGILDPKYKKPQPAQEQKTKA.

It belongs to the bacterial ribosomal protein bS16 family. As to quaternary structure, component of the mitochondrial small ribosomal subunit (mt-SSU). Mature N.crassa 74S mitochondrial ribosomes consist of a small (37S) and a large (54S) subunit. The 37S small subunit contains a 16S ribosomal RNA (16S mt-rRNA) and 32 different proteins. The 54S large subunit contains a 23S rRNA (23S mt-rRNA) and 42 different proteins.

It localises to the mitochondrion. Functionally, component of the mitochondrial ribosome (mitoribosome), a dedicated translation machinery responsible for the synthesis of mitochondrial genome-encoded proteins, including at least some of the essential transmembrane subunits of the mitochondrial respiratory chain. The mitoribosomes are attached to the mitochondrial inner membrane and translation products are cotranslationally integrated into the membrane. The protein is Small ribosomal subunit protein bS16m (cyt-21) of Neurospora crassa (strain ATCC 24698 / 74-OR23-1A / CBS 708.71 / DSM 1257 / FGSC 987).